The chain runs to 124 residues: Fluoride-specific ion channel FluC (124 aa).

4 helical membrane-spanning segments follow: residues 4–24, 35–55, 60–80, and 102–122; these read LLLV…ISIF, FGTL…YALG, ISPE…TTFS, and VVLN…LVFS. Na(+)-binding residues include glycine 74 and threonine 77.

It belongs to the fluoride channel Fluc/FEX (TC 1.A.43) family.

The protein resides in the cell inner membrane. It carries out the reaction fluoride(in) = fluoride(out). With respect to regulation, na(+) is not transported, but it plays an essential structural role and its presence is essential for fluoride channel function. Functionally, fluoride-specific ion channel. Important for reducing fluoride concentration in the cell, thus reducing its toxicity. This chain is Fluoride-specific ion channel FluC, found in Shewanella oneidensis (strain ATCC 700550 / JCM 31522 / CIP 106686 / LMG 19005 / NCIMB 14063 / MR-1).